The chain runs to 668 residues: Hemocyanin subunit D (668 aa).

A signal peptide spans 1 to 22 (MDTRVLRLTLALVALSGVLADS). Cu cation-binding residues include histidine 206, histidine 210, and histidine 236. The N-linked (GlcNAc...) asparagine glycan is linked to asparagine 322. The Cu cation site is built by histidine 357, histidine 361, and histidine 397. Cysteine 567 and cysteine 614 are oxidised to a cystine.

Belongs to the tyrosinase family. Hemocyanin subfamily. 36-chain polymer consisting of 6 hexamers, each of which includes 4 different chains, A, B, C and D. In terms of tissue distribution, hemolymph.

It is found in the secreted. The protein resides in the extracellular space. Functionally, hemocyanins are copper-containing oxygen carriers occurring freely dissolved in the hemolymph of many mollusks and arthropods. The chain is Hemocyanin subunit D (HCD) from Scutigera coleoptrata (House centipede).